The primary structure comprises 104 residues: Large ribosomal subunit protein uL24 (104 aa).

This sequence belongs to the universal ribosomal protein uL24 family. Part of the 50S ribosomal subunit.

In terms of biological role, one of two assembly initiator proteins, it binds directly to the 5'-end of the 23S rRNA, where it nucleates assembly of the 50S subunit. Functionally, one of the proteins that surrounds the polypeptide exit tunnel on the outside of the subunit. The sequence is that of Large ribosomal subunit protein uL24 from Aliivibrio fischeri (strain ATCC 700601 / ES114) (Vibrio fischeri).